The primary structure comprises 957 residues: Vacuolar membrane protease (957 aa).

Residues 1 to 10 (MARYNPFSFT) are Cytoplasmic-facing. Residues 11-31 (PGPVVFFTTVIYVGLFAALLV) traverse the membrane as a helical segment. Over 32–369 (THLTVPDYPS…RVFVVFQLHT (338 aa)) the chain is Vacuolar. N-linked (GlcNAc...) asparagine glycosylation is found at Asn-48, Asn-105, and Asn-136. Zn(2+) is bound by residues His-152 and Asp-164. The Proton acceptor role is filled by Glu-198. Glu-199, Glu-224, and His-297 together coordinate Zn(2+). Residues 370-390 (LFALCVTLLVVAPIALIGLTF) form a helical membrane-spanning segment. Topologically, residues 391-423 (GLSKADKNYLLARKAFVYSSDDDNPVQLYGWRG) are cytoplasmic. The helical transmembrane segment at 424–444 (FFRFPIVFVSATAVVVALAYL) threads the bilayer. The Vacuolar segment spans residues 445–450 (LVRFNA). Residues 451–471 (FIIYSSPFAVWSMMLSAWFFV) form a helical membrane-spanning segment. The Cytoplasmic segment spans residues 472 to 490 (AWFFSRGADAMRPSALQRM). A helical membrane pass occupies residues 491-511 (YALIWLFIGSFVLLTIITVFV). The Vacuolar segment spans residues 512–521 (NNYQVVAGYP). Residues 522 to 542 (ALFYFAVVFAALMLSYLELFF) form a helical membrane-spanning segment. The Cytoplasmic portion of the chain corresponds to 543–642 (APTKSAYARH…YPGEQEWSGK (100 aa)). Disordered regions lie at residues 560–591 (RRNSESASRPLTGSTTAARSDDRPVADDDATE) and 603–628 (FTRYGSRRDSTSEGDEDHAQGSRRLD). Polar residues predominate over residues 564 to 577 (ESASRPLTGSTTAA). The chain crosses the membrane as a helical span at residues 643–663 (LPSWIWIIQLLLLAPLVIVLV). The Vacuolar segment spans residues 664–685 (GQVALLLTSALYQTPSDGNSPL). A helical transmembrane segment spans residues 686-706 (FIYLAIAALSVLLLAPTGPFI). At 707–713 (HRFTYHV) the chain is on the cytoplasmic side. Residues 714–734 (PTFLFLVCLATVIYNLVAFPF) form a helical membrane-spanning segment. The Vacuolar portion of the chain corresponds to 735–957 (SRDHRLKVYF…LVEGFKQFEI (223 aa)). N-linked (GlcNAc...) asparagine glycans are attached at residues Asn-782, Asn-818, and Asn-834.

The protein belongs to the peptidase M28 family. The cofactor is Zn(2+).

The protein localises to the vacuole membrane. May be involved in vacuolar sorting and osmoregulation. This Pyrenophora tritici-repentis (strain Pt-1C-BFP) (Wheat tan spot fungus) protein is Vacuolar membrane protease.